The chain runs to 1058 residues: Carbamoyl phosphate synthase large chain (1058 aa).

The carboxyphosphate synthetic domain stretch occupies residues 1 to 401 (MPKRTDIQKI…SLLKACRSLE (401 aa)). 12 residues coordinate ATP: Arg-129, Arg-169, Gly-175, Gly-176, Arg-208, Ile-210, Glu-215, Gly-241, Ile-242, His-243, Gln-284, and Glu-298. The 195-residue stretch at 133–327 (KQLMEELEQP…IAKLAAKIAV (195 aa)) folds into the ATP-grasp 1 domain. Mg(2+) is bound by residues Gln-284, Glu-298, and Asn-300. Mn(2+)-binding residues include Gln-284, Glu-298, and Asn-300. The oligomerization domain stretch occupies residues 402–546 (IGVHHNEIPE…YSTYGWENES (145 aa)). The interval 547–929 (IRSDKESVLV…ALYKAFEASY (383 aa)) is carbamoyl phosphate synthetic domain. The region spanning 671 to 861 (EQALKELDIP…MAQVATKLIL (191 aa)) is the ATP-grasp 2 domain. 10 residues coordinate ATP: Arg-707, Ser-746, Ile-748, Glu-752, Gly-777, Val-778, His-779, Ser-780, Gln-820, and Glu-832. Mg(2+)-binding residues include Gln-820, Glu-832, and Asn-834. Positions 820, 832, and 834 each coordinate Mn(2+). The MGS-like domain maps to 930 to 1058 (LHLPTFGNVV…ESRSFVTEAI (129 aa)). An allosteric domain region spans residues 930 to 1058 (LHLPTFGNVV…ESRSFVTEAI (129 aa)).

This sequence belongs to the CarB family. In terms of assembly, composed of two chains; the small (or glutamine) chain promotes the hydrolysis of glutamine to ammonia, which is used by the large (or ammonia) chain to synthesize carbamoyl phosphate. Tetramer of heterodimers (alpha,beta)4. Mg(2+) is required as a cofactor. Mn(2+) serves as cofactor.

The enzyme catalyses hydrogencarbonate + L-glutamine + 2 ATP + H2O = carbamoyl phosphate + L-glutamate + 2 ADP + phosphate + 2 H(+). The catalysed reaction is hydrogencarbonate + NH4(+) + 2 ATP = carbamoyl phosphate + 2 ADP + phosphate + 2 H(+). It functions in the pathway amino-acid biosynthesis; L-arginine biosynthesis; carbamoyl phosphate from bicarbonate: step 1/1. The protein operates within pyrimidine metabolism; UMP biosynthesis via de novo pathway; (S)-dihydroorotate from bicarbonate: step 1/3. Large subunit of the glutamine-dependent carbamoyl phosphate synthetase (CPSase). CPSase catalyzes the formation of carbamoyl phosphate from the ammonia moiety of glutamine, carbonate, and phosphate donated by ATP, constituting the first step of 2 biosynthetic pathways, one leading to arginine and/or urea and the other to pyrimidine nucleotides. The large subunit (synthetase) binds the substrates ammonia (free or transferred from glutamine from the small subunit), hydrogencarbonate and ATP and carries out an ATP-coupled ligase reaction, activating hydrogencarbonate by forming carboxy phosphate which reacts with ammonia to form carbamoyl phosphate. The chain is Carbamoyl phosphate synthase large chain from Streptococcus pneumoniae (strain Hungary19A-6).